A 338-amino-acid polypeptide reads, in one-letter code: Phenylalanine--tRNA ligase alpha subunit (338 aa).

Glu-252 lines the Mg(2+) pocket.

Belongs to the class-II aminoacyl-tRNA synthetase family. Phe-tRNA synthetase alpha subunit type 1 subfamily. As to quaternary structure, tetramer of two alpha and two beta subunits. It depends on Mg(2+) as a cofactor.

It localises to the cytoplasm. The catalysed reaction is tRNA(Phe) + L-phenylalanine + ATP = L-phenylalanyl-tRNA(Phe) + AMP + diphosphate + H(+). In Pseudomonas fluorescens (strain ATCC BAA-477 / NRRL B-23932 / Pf-5), this protein is Phenylalanine--tRNA ligase alpha subunit.